We begin with the raw amino-acid sequence, 68 residues long: Large ribosomal subunit protein bL32 (68 aa).

The protein belongs to the bacterial ribosomal protein bL32 family.

The polypeptide is Large ribosomal subunit protein bL32 (Ruegeria pomeroyi (strain ATCC 700808 / DSM 15171 / DSS-3) (Silicibacter pomeroyi)).